The following is a 308-amino-acid chain: D-alanine--D-alanine ligase (308 aa).

The region spanning 104-301 (KQIWQGSDLP…FDELCVAILD (198 aa)) is the ATP-grasp domain. 130 to 185 (IAELGLPVIIKPVHEGSSVGMSKVEKAEDFAAAIEKATQHDAVVMAEKWITGREFT) is a binding site for ATP. Mg(2+) contacts are provided by Asp-255, Glu-268, and Asn-270.

This sequence belongs to the D-alanine--D-alanine ligase family. Mg(2+) serves as cofactor. Requires Mn(2+) as cofactor.

It is found in the cytoplasm. It catalyses the reaction 2 D-alanine + ATP = D-alanyl-D-alanine + ADP + phosphate + H(+). It functions in the pathway cell wall biogenesis; peptidoglycan biosynthesis. In terms of biological role, cell wall formation. This chain is D-alanine--D-alanine ligase, found in Acinetobacter baumannii (strain AB307-0294).